Here is a 215-residue protein sequence, read N- to C-terminus: Cytochrome b6 (215 aa).

A helical transmembrane segment spans residues 32-52 (IFYCLGGITLTCFLVQVATGF). Residue Cys-35 participates in heme c binding. Heme b is bound by residues His-86 and His-100. Helical transmembrane passes span 90–110 (ASMM…TGGF), 116–136 (LTWV…VTGY), and 186–206 (LHTF…FLMI). Residues His-187 and His-202 each contribute to the heme b site.

The protein belongs to the cytochrome b family. PetB subfamily. The 4 large subunits of the cytochrome b6-f complex are cytochrome b6, subunit IV (17 kDa polypeptide, PetD), cytochrome f and the Rieske protein, while the 4 small subunits are PetG, PetL, PetM and PetN. The complex functions as a dimer. Heme b serves as cofactor. It depends on heme c as a cofactor.

Its subcellular location is the plastid. The protein localises to the chloroplast thylakoid membrane. Functionally, component of the cytochrome b6-f complex, which mediates electron transfer between photosystem II (PSII) and photosystem I (PSI), cyclic electron flow around PSI, and state transitions. This chain is Cytochrome b6, found in Huperzia lucidula (Shining clubmoss).